Reading from the N-terminus, the 222-residue chain is MKLNTYIDHTKLGPIVTLSDIDTLIDEAIEHQFKSVCVSPIWVAHAKSRLEGTGVLVCTVVGFPFGTHLPKVKAFETKEAIKQGADEIDMVVDVDAVRSKDRSRVSKDIKAVVKAAQGRTVKVIIETAYLDKKQITFVSKLAVKAGATFVKTSTGYASRGASVEDIVTIKKAVGDDALIKASGGIRSKEDALLMIEKGANRLGTSSGVKLIKGETSDGNTTY.

Catalysis depends on D89, which acts as the Proton donor/acceptor. Catalysis depends on K151, which acts as the Schiff-base intermediate with acetaldehyde. The active-site Proton donor/acceptor is K180.

Belongs to the DeoC/FbaB aldolase family. DeoC type 1 subfamily.

It localises to the cytoplasm. It carries out the reaction 2-deoxy-D-ribose 5-phosphate = D-glyceraldehyde 3-phosphate + acetaldehyde. Its pathway is carbohydrate degradation; 2-deoxy-D-ribose 1-phosphate degradation; D-glyceraldehyde 3-phosphate and acetaldehyde from 2-deoxy-alpha-D-ribose 1-phosphate: step 2/2. Its function is as follows. Catalyzes a reversible aldol reaction between acetaldehyde and D-glyceraldehyde 3-phosphate to generate 2-deoxy-D-ribose 5-phosphate. The chain is Deoxyribose-phosphate aldolase from Acholeplasma laidlawii (strain PG-8A).